Consider the following 634-residue polypeptide: DNA-directed RNA polymerase subunit gamma (634 aa).

Zn(2+)-binding residues include Cys74, Cys76, Cys89, and Cys92. Mg(2+)-binding residues include Asp471, Asp473, and Asp475.

Belongs to the RNA polymerase beta' chain family. RpoC1 subfamily. As to quaternary structure, in cyanobacteria the RNAP catalytic core is composed of 2 alpha, 1 beta, 1 beta', 1 gamma and 1 omega subunit. When a sigma factor is associated with the core the holoenzyme is formed, which can initiate transcription. Mg(2+) serves as cofactor. The cofactor is Zn(2+).

The enzyme catalyses RNA(n) + a ribonucleoside 5'-triphosphate = RNA(n+1) + diphosphate. Functionally, DNA-dependent RNA polymerase catalyzes the transcription of DNA into RNA using the four ribonucleoside triphosphates as substrates. This Parasynechococcus marenigrum (strain WH8102) protein is DNA-directed RNA polymerase subunit gamma.